The primary structure comprises 250 residues: Aquaporin TIP2-1 (250 aa).

Residue M1 is modified to N-acetylmethionine. Residues 1–20 (MAGVAFGSFDDSFSLASLRA) lie on the Cytoplasmic side of the membrane. An N-acetylalanine; in Aquaporin TIP2-1, N-terminally processed modification is found at A2. Residues 21 to 41 (YLAEFISTLLFVFAGVGSAIA) traverse the membrane as a helical segment. Residues 42-54 (YAKLTSDAALDTP) lie on the Vacuolar side of the membrane. Residues 55 to 75 (GLVAIAVCHGFALFVAVAIGA) form a helical membrane-spanning segment. Over 76-98 (NISGGHVNPAVTFGLAVGGQITV) the chain is Cytoplasmic. An NPA 1 motif is present at residues 83 to 85 (NPA). Residues 99-119 (ITGVFYWIAQLLGSTAACFLL) form a helical membrane-spanning segment. The Vacuolar segment spans residues 120 to 141 (KYVTGGLAVPTHSVAAGLGSIE). A helical transmembrane segment spans residues 142 to 162 (GVVMEIIITFALVYTVYATAA). The Cytoplasmic segment spans residues 163–168 (DPKKGS). Residues 169–189 (LGTIAPLAIGLIVGANILAAG) traverse the membrane as a helical segment. Topologically, residues 190–215 (PFSGGSMNPARSFGPAVAAGDFSGHW) are vacuolar. Positions 197–199 (NPA) match the NPA 2 motif. A helical membrane pass occupies residues 216-236 (VYWVGPLIGGGLAGLIYGNVF). Residues 237-250 (MGSSEHVPLASADF) are Cytoplasmic-facing.

Belongs to the MIP/aquaporin (TC 1.A.8) family. TIP (TC 1.A.8.10) subfamily. As to quaternary structure, interacts with cucumber mosaic virus (CMV) Protein 1a. In terms of tissue distribution, strongly expressed in shoot, rosette, bolt and flowers. Also expressed in roots, flower buds and above ground.

The protein localises to the vacuole membrane. Aquaporin required to facilitate the transport of water from the vacuolar compartment to the cytoplasm. Does not promote glycerol permeability. Its function is impaired by Hg(2+). Transports urea in yeast cells and Xenopus laevis oocytes in a pH-independent manner. Transports methylammonium or ammonium in yeast cells and Xenopus laevis oocytes, preferentially at high medium pH. May participate in vacuolar compartmentation and detoxification of ammonium. The protein is Aquaporin TIP2-1 (TIP2-1) of Arabidopsis thaliana (Mouse-ear cress).